The sequence spans 348 residues: Nuclear receptor subfamily 1 group I member 3 (348 aa).

A DNA-binding region (nuclear receptor) is located at residues 8–83 (PRSCMVCGDR…AGMKKEMILS (76 aa)). An NR C4-type zinc finger spans residues 11-31 (CMVCGDRATGYHFHALTCEGC). Thr-38 is subject to Phosphothreonine; by PKC. Residues 47–71 (CPFAGSCKVNKAQRRHCPACRLQKC) form an NR C4-type zinc finger. The NR LBD domain maps to 109-348 (GQQELVQTLL…MMPLLQEICS (240 aa)).

This sequence belongs to the nuclear hormone receptor family. NR1 subfamily. As to quaternary structure, heterodimer of NR1I3 and RXR. Interacts with PSMC4. Interacts with ECT2. Directly interacts with DNAJC7; this complex may also include HSP90. Interacts with CRY1. Interacts with CRY2 in a ligand-dependent manner. In terms of processing, phosphorylated at Thr-38 by PKC, dephosphorylation of Thr-38 is required for nuclear translocation and activation.

Its subcellular location is the nucleus. The protein localises to the cytoplasm. The protein resides in the cytoskeleton. Functionally, binds and transactivates the retinoic acid response elements that control expression of the retinoic acid receptor beta 2 and alcohol dehydrogenase 3 genes. Transactivates both the phenobarbital responsive element module of the human CYP2B6 gene and the CYP3A4 xenobiotic response element. This chain is Nuclear receptor subfamily 1 group I member 3 (NR1I3), found in Pusa sibirica (Baikal seal).